Reading from the N-terminus, the 264-residue chain is 3-methyl-2-oxobutanoate hydroxymethyltransferase (264 aa).

The Mg(2+) site is built by Asp-45 and Asp-84. 3-methyl-2-oxobutanoate contacts are provided by residues 45 to 46, Asp-84, and Lys-112; that span reads DS. Residue Glu-114 coordinates Mg(2+). Glu-181 acts as the Proton acceptor in catalysis.

Belongs to the PanB family. In terms of assembly, homodecamer; pentamer of dimers. Mg(2+) is required as a cofactor.

The protein resides in the cytoplasm. It catalyses the reaction 3-methyl-2-oxobutanoate + (6R)-5,10-methylene-5,6,7,8-tetrahydrofolate + H2O = 2-dehydropantoate + (6S)-5,6,7,8-tetrahydrofolate. The protein operates within cofactor biosynthesis; (R)-pantothenate biosynthesis; (R)-pantoate from 3-methyl-2-oxobutanoate: step 1/2. In terms of biological role, catalyzes the reversible reaction in which hydroxymethyl group from 5,10-methylenetetrahydrofolate is transferred onto alpha-ketoisovalerate to form ketopantoate. The polypeptide is 3-methyl-2-oxobutanoate hydroxymethyltransferase (Vibrio vulnificus (strain YJ016)).